Consider the following 136-residue polypeptide: Mini-ribonuclease 3 (136 aa).

The active site involves Asp20.

It belongs to the MrnC RNase family. In terms of assembly, homodimer. The cofactor is Mg(2+).

Its subcellular location is the cytoplasm. Involved in correct processing of both the 5' and 3' ends of 23S rRNA precursor. Processes 30S rRNA precursor transcript even in absence of ribonuclease 3 (Rnc); Rnc processes 30S rRNA into smaller rRNA precursors. The sequence is that of Mini-ribonuclease 3 from Listeria monocytogenes serovar 1/2a (strain ATCC BAA-679 / EGD-e).